The chain runs to 837 residues: Semaphorin-4B (837 aa).

The signal sequence occupies residues 1-43; that stretch reads MLRTAMGLRSWLAAPWGALPPRPPLLLLLLLLLLLQPPPPTWA. Residues 44–717 are Extracellular-facing; that stretch reads LSPRISLPLG…WGADRSYWKE (674 aa). Residues 47 to 523 form the Sema domain; the sequence is RISLPLGSEE…SHSGVVQVPM (477 aa). N-linked (GlcNAc...) asparagine glycosylation is found at N69 and N96. 2 disulfide bridges follow: C120-C131 and C149-C158. N-linked (GlcNAc...) asparagine glycosylation occurs at N165. 2 disulfides stabilise this stretch: C286–C399 and C310–C359. N410 and N525 each carry an N-linked (GlcNAc...) asparagine glycan. One can recognise a PSI domain in the interval 525–579; the sequence is NCSLYRSCGDCLLARDPYCAWSGSSCKHVSLYQPQLATRPWIQDIEGASAKDLCS. Disulfide bonds link C526-C543 and C611-C656. The region spanning 604 to 663 is the Ig-like C2-type domain; it reads NTVNTLACPLLSNLATRLWLRNGAPVNASASCHVLPTGDLLLVGTQQLGEFQCWSLEEGF. N-linked (GlcNAc...) asparagine glycosylation is present at N630. The helical transmembrane segment at 718–738 threads the bilayer; the sequence is FLVMCTLFVLAVLLPVLFLLY. Topologically, residues 739–837 are cytoplasmic; it reads RHRNSMKVFL…LGSEIRDSVV (99 aa). The disordered stretch occupies residues 767–805; the sequence is PETRPLNGLGPPSTPLDHRGYQSLSDSPPGSRVFTESEK. Residues S793, S818, and S830 each carry the phosphoserine modification.

Belongs to the semaphorin family.

Its subcellular location is the membrane. Its function is as follows. Inhibits axonal extension by providing local signals to specify territories inaccessible for growing axons. This Homo sapiens (Human) protein is Semaphorin-4B.